Reading from the N-terminus, the 90-residue chain is Small ribosomal subunit protein uS17 (90 aa).

It belongs to the universal ribosomal protein uS17 family. Part of the 30S ribosomal subunit.

Its function is as follows. One of the primary rRNA binding proteins, it binds specifically to the 5'-end of 16S ribosomal RNA. The sequence is that of Small ribosomal subunit protein uS17 from Dehalococcoides mccartyi (strain ATCC BAA-2100 / JCM 16839 / KCTC 5957 / BAV1).